We begin with the raw amino-acid sequence, 1020 residues long: Probable beta-galactosidase B (1020 aa).

Residues 1–22 (MLISKTVLSGLALGASFVGVSA) form the signal peptide. A glycan (N-linked (GlcNAc...) asparagine) is linked at N25. Position 90 (Y90) interacts with substrate. A glycan (N-linked (GlcNAc...) asparagine) is linked at N111. Substrate is bound by residues N135, A136, and E137. N-linked (GlcNAc...) asparagine glycosylation is present at N172. N195 is a binding site for substrate. E196 acts as the Proton donor in catalysis. Residues N210 and N251 are each glycosylated (N-linked (GlcNAc...) asparagine). Y264 contributes to the substrate binding site. Cysteines 270 and 323 form a disulfide. Residue N271 is glycosylated (N-linked (GlcNAc...) asparagine). Residue E307 is the Nucleophile of the active site. Y372 contributes to the substrate binding site. 11 N-linked (GlcNAc...) asparagine glycosylation sites follow: N410, N455, N549, N596, N625, N702, N747, N785, N819, N880, and N919.

It belongs to the glycosyl hydrolase 35 family.

It is found in the secreted. The catalysed reaction is Hydrolysis of terminal non-reducing beta-D-galactose residues in beta-D-galactosides.. Functionally, cleaves beta-linked terminal galactosyl residues from gangliosides, glycoproteins, and glycosaminoglycans. This chain is Probable beta-galactosidase B (lacB), found in Aspergillus flavus (strain ATCC 200026 / FGSC A1120 / IAM 13836 / NRRL 3357 / JCM 12722 / SRRC 167).